Consider the following 233-residue polypeptide: Small ribosomal subunit protein uS2 (233 aa).

Belongs to the universal ribosomal protein uS2 family.

This chain is Small ribosomal subunit protein uS2, found in Clostridium acetobutylicum (strain ATCC 824 / DSM 792 / JCM 1419 / IAM 19013 / LMG 5710 / NBRC 13948 / NRRL B-527 / VKM B-1787 / 2291 / W).